A 560-amino-acid polypeptide reads, in one-letter code: MGLNLNPILRQELANLDKDTESRKSAMKALKSYVKDLDSKAIPGFLAQVFETKETNSLSGEYTISLYEILARVHGPNIVPQIDTIMSTIVKTLASSAGSFPLQQACSKVIPAIARYGIDPTTTEDKKRVIIHSLCKPLTDSLLASQESLTSGAALCLKALVDSDNWRFASDEMVNRVCQNVVVALDSNSNQTHLQMGLVMSLAKHNPLIVEAYARLLIHTGLRILGFGVSEGNSQKRLSAVQMLNFLMKCLDPRSIYSEVELIIKEMERCQSDQMAYVRGAAYEAMMTSKRIAAELESKMEKGCRSVTGSNFSRRNCSSIVPDYSLSPESQTLGSFSGYDSPVESSPISHTSCNSEFDRRSVNRKLWRRDENGGVVDISLKDGLFSRVTKGSTTVSDSPLVPYDTCENGDEFEGFLMESLRNTTPSPQRQRSRRINAEDFNIFSTPRKLISSLQYPDDVDLDHSDIQSPILRGEREKTIGSRKNPKLRKQFPTMVETMSSTITVSEDTAQTQMITGKKKKKKMSYAKLVIAISFVVVALFATVILMVNQDDDVGYYTVPT.

Residue Gly-2 is modified to N-acetylglycine. The tract at residues Pro-7 to Met-287 is ARMADILLO-type fold. In terms of domain architecture, KASH spans Lys-517 to Thr-560. The chain crosses the membrane as a helical span at residues Leu-528–Asn-548. A Required for nuclear localization motif is present at residues Thr-557–Thr-560.

As to quaternary structure, interacts with SUN1 and SUN2. Binds to F-actin. Preferentially expressed in guards cells, but also detected in root cells.

It is found in the nucleus membrane. Plays a role in nucleus positioning in guard cells. This is Protein SINE1 from Arabidopsis thaliana (Mouse-ear cress).